Reading from the N-terminus, the 284-residue chain is Tropomyosin (284 aa).

The stretch at 1–273 forms a coiled coil; it reads MEAIKKKMQA…KEKYKSISDE (273 aa).

Belongs to the tropomyosin family. Homodimer. Ubiquitous, but especially prevalent in the anterior muscle bundles associated with legs. Expression in the mid and posterior regions is probably related to the numerous, small muscle bundles associated with the digestive and reproductive systems (at protein level).

Tropomyosin, in association with the troponin complex, plays a central role in the calcium dependent regulation of muscle contraction. This chain is Tropomyosin, found in Psoroptes ovis (Sheep scab mite).